The chain runs to 132 residues: Large ribosomal subunit protein uL24 (132 aa).

It belongs to the universal ribosomal protein uL24 family. As to quaternary structure, part of the 50S ribosomal subunit.

One of two assembly initiator proteins, it binds directly to the 5'-end of the 23S rRNA, where it nucleates assembly of the 50S subunit. Its function is as follows. One of the proteins that surrounds the polypeptide exit tunnel on the outside of the subunit. This chain is Large ribosomal subunit protein uL24, found in Synechococcus sp. (strain JA-2-3B'a(2-13)) (Cyanobacteria bacterium Yellowstone B-Prime).